We begin with the raw amino-acid sequence, 488 residues long: MIPVVALVGRPNVGKSTLFNRLTRTRDALVADFPGLTRDRKYGRAFLSGYEFIVVDTGGIDGTEEGIETKMAEQSLAAIEEADVVLFMTDARAGLTAADLSIAQHLRSREKTTFVVANKVDGIDADSACAEFWSLGLGEVYQMAASQGRGVTNMIEYALTPYAEAMGIERQGEEEVVDERQYTEEEAEAEQKRLQDLPIKLAIIGKPNVGKSTLTNRILGEERVVVYDEPGTTRDSIYIPMEREGREYVIIDTAGVRRRSKVHQVIEKFSVIKTLKAVEDANVVLLIIDAREGVAEQDLGLLGFALNAGRALVIAVNKWDGIDQGIKDRVKSELDRRLGFIDFARIHFISALHGTGVGHLFESIEEAYDSATRRVSTSMLTRIMQMSQDDHQPPLVNGRRVKLKYAHAGGYNPPIVVIHGNQVSRLPDSYKRYMMNYFRRSLKVVGTPIQLRFQEGDNPFENKTEKLTMSQERRRKRALSHIKDRKTK.

2 EngA-type G domains span residues 3-166 and 199-372; these read PVVA…AEAM and IKLA…DSAT. Residues 9–16, 56–60, 118–121, 205–212, 252–256, and 317–320 each bind GTP; these read GRPNVGKS, DTGGI, NKVD, GKPNVGKS, DTAGV, and NKWD. The KH-like domain occupies 373-457; the sequence is RRVSTSMLTR…PIQLRFQEGD (85 aa). The interval 469–488 is disordered; sequence MSQERRRKRALSHIKDRKTK. The span at 473–488 shows a compositional bias: basic residues; the sequence is RRRKRALSHIKDRKTK.

The protein belongs to the TRAFAC class TrmE-Era-EngA-EngB-Septin-like GTPase superfamily. EngA (Der) GTPase family. Associates with the 50S ribosomal subunit.

Functionally, GTPase that plays an essential role in the late steps of ribosome biogenesis. The sequence is that of GTPase Der from Shewanella putrefaciens (strain CN-32 / ATCC BAA-453).